Reading from the N-terminus, the 209-residue chain is uncharacterized protein (209 aa).

4Fe-4S ferredoxin-type domains are found at residues 38–67 (KTKP…IFSF), 63–92 (KIFS…KDRF), 90–119 (DRFT…KEIP), 122–151 (KTPV…EINP), 145–174 (INKE…TPDE), and 179–209 (LIVK…HRES). Positions 47, 50, 53, 57, 72, 75, 78, 82, 99, 102, 105, and 109 each coordinate [4Fe-4S] cluster. Positions 154, 157, 160, 164, 188, 191, 194, and 198 each coordinate [4Fe-4S] cluster.

This is an uncharacterized protein from Methanocaldococcus jannaschii (strain ATCC 43067 / DSM 2661 / JAL-1 / JCM 10045 / NBRC 100440) (Methanococcus jannaschii).